The chain runs to 227 residues: Ubiquitin domain-containing protein 1 (227 aa).

Over residues 1–14 the composition is skewed to basic and acidic residues; it reads MGGCVGRERAETRG. The segment at 1–45 is disordered; the sequence is MGGCVGRERAETRGRGSRTQRKRGGRNEPLKKDKPKWKSDYPMTE. Positions 15 to 24 are enriched in basic residues; that stretch reads RGSRTQRKRG. A compositionally biased stretch (basic and acidic residues) spans 25–39; sequence GRNEPLKKDKPKWKS. A Ubiquitin-like domain is found at 150–225; that stretch reads FQLKVRLSTG…IQVIVNQPAP (76 aa).

In terms of biological role, may be involved in the regulation of cellular senescence through a positive feedback loop with TP53. The polypeptide is Ubiquitin domain-containing protein 1 (ubtd1) (Danio rerio (Zebrafish)).